A 489-amino-acid chain; its full sequence is Ammonium transporter Rh type C (489 aa).

Topologically, residues 1–21 (MGNCADCLRGFFCPPKNTNIR) are cytoplasmic. Residues 22–42 (ISLPAVCFVWQIAMIVLFGVF) form a helical membrane-spanning segment. At 43-75 (IRYDAESDIRLWLQLKHTNNITSDIENDFYFRY) the chain is on the extracellular side. N-linked (GlcNAc...) asparagine glycosylation is present at Asn62. A helical membrane pass occupies residues 76 to 96 (PSFQDVHVMIFVGFGFLMTFL). Over 97–100 (KRYS) the chain is Cytoplasmic. The chain crosses the membrane as a helical span at residues 101-121 (FGGVGFNFLIGAFGLQWALLM). Residues 122–140 (QGWFHALDPTTGKISIGVE) are Extracellular-facing. A helical membrane pass occupies residues 141–161 (GLINADFCVAASLIAYGALLG). Topologically, residues 162–169 (KVSPVQLM) are cytoplasmic. A helical transmembrane segment spans residues 170–190 (VVTLFGVTLFAVEEYIILNLL). Topologically, residues 191 to 195 (HCRDA) are extracellular. The helical transmembrane segment at 196 to 216 (GGSMVIHCFGGYYGLTISWIL) threads the bilayer. The Cytoplasmic portion of the chain corresponds to 217–235 (YRPKLHQSKRLNGSVYHSD). A helical transmembrane segment spans residues 236–256 (VFAMIGTLFLWMFWPSFNSAI). The Extracellular segment spans residues 257 to 266 (TDHGSGQHRT). Residues 267–287 (AINTYIALASSVLTTVAISSA) form a helical membrane-spanning segment. At 288–298 (SEKRGKLDMVH) the chain is on the cytoplasmic side. Residues 299–319 (IQNATLAGGVAMGTAAEFMIT) traverse the membrane as a helical segment. Position 320 (Pro320) is a topological domain, extracellular. Residues 321-341 (YGALIVGFCTGIISTFGYLFV) traverse the membrane as a helical segment. The Cytoplasmic segment spans residues 342–359 (SPFMEKYLKIQDTCGVHN). A helical membrane pass occupies residues 360–380 (LHAMPGMLGGFIGAIVAAAAT). The Extracellular portion of the chain corresponds to 381–412 (EEVYSREGLIETFDFEGKFADRTVGTQGGFQA). Residues 413-433 (AGVCVAIAFAVVGGAVVGLIL) traverse the membrane as a helical segment. Residues 434–489 (RLPIWGDPADDNCFDDEVYWEVPEDEEGILPVLEYNNHMTHKHQDISESNFSVEQS) are Cytoplasmic-facing.

It belongs to the ammonium transporter (TC 2.A.49) family. Rh subfamily. As to quaternary structure, homotrimer.

The protein localises to the apical cell membrane. Functions as an ammonia transporter. May play a role in the elimination of ammonia in the gill. This chain is Ammonium transporter Rh type C (rhcg), found in Gasterosteus aculeatus (Three-spined stickleback).